Reading from the N-terminus, the 534-residue chain is Importin subunit alpha-1b (534 aa).

One can recognise an IBB domain in the interval 1–58 (MSLRPSERAEVRRSRYKVAVDADEGRRRREDNMVEIRKSRREESLLKKRRDGLPAAAA). ARM repeat units follow at residues 111–151 (SPPI…NIAS), 154–193 (SDNT…NVAG), 196–236 (PKCR…NFCR), 238–277 (KPQP…YLSD), 280–319 (NDKI…NIVT), 322–362 (DMQT…NITA), 365–404 (REQI…NATS), and 408–447 (HDQI…NILK). The tract at residues 505-534 (DAMPSGDNAQNGFNFGNQQPNVPSGGFNFG) is disordered. The span at 514–523 (QNGFNFGNQQ) shows a compositional bias: low complexity.

Belongs to the importin alpha family. As to quaternary structure, forms a complex with importin subunit beta-1. The whole complex, most stable and composed of importin alpha and importin beta, is referred to as PTAC or pore targeting complex. In terms of tissue distribution, highly expressed in root and weakly in callus, etiolated leaf and green leaf.

The protein resides in the cytoplasm. It localises to the perinuclear region. Its function is as follows. Functions in nuclear protein import. Binds specifically and directly to substrates containing either a simple or bipartite NLS motif. Promotes docking of import substrates to the nuclear envelope. In conjunction with importin beta-1, mediates the nuclear envelope docking, and the subsequent translocation into the nucleus of the constitutive morphogenetic 1 (COP1) protein containing bipartite NLS motif. This is Importin subunit alpha-1b from Oryza sativa subsp. japonica (Rice).